Here is a 153-residue protein sequence, read N- to C-terminus: Bacteriohemerythrin (153 aa).

H21, H57, E61, H76, H80, H115, and D120 together coordinate Fe cation.

It belongs to the hemerythrin family. In terms of assembly, monomer.

Oxygen-binding protein. May be involved in a storage mechanism or for delivery to oxygen-requiring enzymes. The oxygen-binding site contains two iron atoms. The polypeptide is Bacteriohemerythrin (Pseudomonas aeruginosa (strain UCBPP-PA14)).